The following is a 217-amino-acid chain: Ribosomal RNA large subunit methyltransferase E (217 aa).

Residues Gly-71, Trp-73, Asp-91, Asp-107, and Asp-132 each contribute to the S-adenosyl-L-methionine site. Lys-172 functions as the Proton acceptor in the catalytic mechanism.

It belongs to the class I-like SAM-binding methyltransferase superfamily. RNA methyltransferase RlmE family.

The protein resides in the cytoplasm. It carries out the reaction uridine(2552) in 23S rRNA + S-adenosyl-L-methionine = 2'-O-methyluridine(2552) in 23S rRNA + S-adenosyl-L-homocysteine + H(+). Functionally, specifically methylates the uridine in position 2552 of 23S rRNA at the 2'-O position of the ribose in the fully assembled 50S ribosomal subunit. The sequence is that of Ribosomal RNA large subunit methyltransferase E from Psychromonas ingrahamii (strain DSM 17664 / CCUG 51855 / 37).